The sequence spans 218 residues: UPF0502 protein Shewana3_1622 (218 aa).

This sequence belongs to the UPF0502 family.

The polypeptide is UPF0502 protein Shewana3_1622 (Shewanella sp. (strain ANA-3)).